We begin with the raw amino-acid sequence, 154 residues long: Aspartate carbamoyltransferase regulatory chain (154 aa).

4 residues coordinate Zn(2+): cysteine 109, cysteine 114, cysteine 138, and cysteine 141.

It belongs to the PyrI family. As to quaternary structure, contains catalytic and regulatory chains. Zn(2+) is required as a cofactor.

Functionally, involved in allosteric regulation of aspartate carbamoyltransferase. This is Aspartate carbamoyltransferase regulatory chain from Aeromonas salmonicida (strain A449).